We begin with the raw amino-acid sequence, 231 residues long: MKRAVVVFSGGQDSTTCLAQARHQYDEVHCVTFDYGQRHRAEIDVARDLALKLGARAHKVLDVTLLNELAVSSLTRDSIPVPDYEPNADGIPNTFVPGRNILFLTLAAIYAYQVKAEAVITGVCETDFSGYPDCRDEFVKALNHAVNLGMAKDIRFETPLMWIDKAETWALADYWGQLDLVREETLTCYNGIKGDGCGHCAACNLRANGLNHYLSNKAAVMAAMKQKTGLR.

8–18 (FSGGQDSTTCL) contributes to the ATP binding site. Zn(2+) is bound by residues Cys188, Cys197, Cys200, and Cys203.

The protein belongs to the QueC family. It depends on Zn(2+) as a cofactor.

It carries out the reaction 7-carboxy-7-deazaguanine + NH4(+) + ATP = 7-cyano-7-deazaguanine + ADP + phosphate + H2O + H(+). It participates in purine metabolism; 7-cyano-7-deazaguanine biosynthesis. Catalyzes the ATP-dependent conversion of 7-carboxy-7-deazaguanine (CDG) to 7-cyano-7-deazaguanine (preQ(0)). The sequence is that of 7-cyano-7-deazaguanine synthase from Salmonella newport (strain SL254).